We begin with the raw amino-acid sequence, 119 residues long: MRHYEIVFMVHPDQSEQVPSMIERYTGIVESNGGKVHRLEDWGRRQLAYPINKLIKAHYVLMNVECGKDELDELESLFRFNDAVIRNMVLGRDEAVTEPSPLARSQEKDEEEGGRTAEA.

Residues 96–119 (VTEPSPLARSQEKDEEEGGRTAEA) are disordered.

The protein belongs to the bacterial ribosomal protein bS6 family.

Binds together with bS18 to 16S ribosomal RNA. The protein is Small ribosomal subunit protein bS6 of Alkalilimnicola ehrlichii (strain ATCC BAA-1101 / DSM 17681 / MLHE-1).